A 339-amino-acid polypeptide reads, in one-letter code: SVP1-like protein 2 (339 aa).

WD repeat units lie at residues 177–217 (AHAN…LVRE) and 222–261 (LDRT…ENKR).

This sequence belongs to the WD repeat PROPPIN family.

It is found in the vacuole membrane. The protein localises to the cytoplasmic vesicle membrane. In terms of biological role, involved in mitochondrial or peroxisomal functions and amino acid signaling pathways. The sequence is that of SVP1-like protein 2 (HSV2) from Kluyveromyces lactis (strain ATCC 8585 / CBS 2359 / DSM 70799 / NBRC 1267 / NRRL Y-1140 / WM37) (Yeast).